A 100-amino-acid polypeptide reads, in one-letter code: Aspartyl/glutamyl-tRNA(Asn/Gln) amidotransferase subunit C (100 aa).

This sequence belongs to the GatC family. As to quaternary structure, heterotrimer of A, B and C subunits.

It catalyses the reaction L-glutamyl-tRNA(Gln) + L-glutamine + ATP + H2O = L-glutaminyl-tRNA(Gln) + L-glutamate + ADP + phosphate + H(+). The enzyme catalyses L-aspartyl-tRNA(Asn) + L-glutamine + ATP + H2O = L-asparaginyl-tRNA(Asn) + L-glutamate + ADP + phosphate + 2 H(+). Functionally, allows the formation of correctly charged Asn-tRNA(Asn) or Gln-tRNA(Gln) through the transamidation of misacylated Asp-tRNA(Asn) or Glu-tRNA(Gln) in organisms which lack either or both of asparaginyl-tRNA or glutaminyl-tRNA synthetases. The reaction takes place in the presence of glutamine and ATP through an activated phospho-Asp-tRNA(Asn) or phospho-Glu-tRNA(Gln). This is Aspartyl/glutamyl-tRNA(Asn/Gln) amidotransferase subunit C from Streptococcus equi subsp. zooepidemicus (strain MGCS10565).